The sequence spans 231 residues: Mediator of RNA polymerase II transcription subunit 18 (231 aa).

A coiled-coil region spans residues histidine 191–leucine 218.

This sequence belongs to the Mediator complex subunit 18 family. In terms of assembly, component of the Mediator complex.

The protein localises to the nucleus. Component of the Mediator complex, a coactivator involved in the regulated transcription of nearly all RNA polymerase II-dependent genes. Mediator functions as a bridge to convey information from gene-specific regulatory proteins to the basal RNA polymerase II transcription machinery. Mediator is recruited to promoters by direct interactions with regulatory proteins and serves as a scaffold for the assembly of a functional preinitiation complex with RNA polymerase II and the general transcription factors. This is Mediator of RNA polymerase II transcription subunit 18 (SRB5) from Yarrowia lipolytica (strain CLIB 122 / E 150) (Yeast).